A 551-amino-acid chain; its full sequence is CTP synthase (551 aa).

Residues 1–267 (MPKYVFVTGG…GRYVMEHLGW (267 aa)) are amidoligase domain. Residue Ser13 participates in CTP binding. Ser13 contributes to the UTP binding site. 14-19 (SVGKGI) provides a ligand contact to ATP. Tyr54 contacts L-glutamine. Asp71 provides a ligand contact to ATP. Mg(2+)-binding residues include Asp71 and Glu141. CTP-binding positions include 148-150 (DIE), 188-193 (KTKPTQ), and Lys224. Residues 188-193 (KTKPTQ) and Lys224 each bind UTP. The 241-residue stretch at 292–532 (RIALVGKYVE…IGVAKHVLRE (241 aa)) folds into the Glutamine amidotransferase type-1 domain. Residue Gly353 participates in L-glutamine binding. Cys380 acts as the Nucleophile; for glutamine hydrolysis in catalysis. Residues 381–384 (YGLH), Glu404, and Arg460 contribute to the L-glutamine site. Residues His505 and Glu507 contribute to the active site.

Belongs to the CTP synthase family. Homotetramer.

The catalysed reaction is UTP + L-glutamine + ATP + H2O = CTP + L-glutamate + ADP + phosphate + 2 H(+). It carries out the reaction L-glutamine + H2O = L-glutamate + NH4(+). The enzyme catalyses UTP + NH4(+) + ATP = CTP + ADP + phosphate + 2 H(+). It functions in the pathway pyrimidine metabolism; CTP biosynthesis via de novo pathway; CTP from UDP: step 2/2. With respect to regulation, allosterically activated by GTP, when glutamine is the substrate; GTP has no effect on the reaction when ammonia is the substrate. The allosteric effector GTP functions by stabilizing the protein conformation that binds the tetrahedral intermediate(s) formed during glutamine hydrolysis. Inhibited by the product CTP, via allosteric rather than competitive inhibition. Catalyzes the ATP-dependent amination of UTP to CTP with either L-glutamine or ammonia as the source of nitrogen. Regulates intracellular CTP levels through interactions with the four ribonucleotide triphosphates. The protein is CTP synthase of Thermomicrobium roseum (strain ATCC 27502 / DSM 5159 / P-2).